Reading from the N-terminus, the 664-residue chain is MDSSTWSPPATATAEPLQAYERIRNAADISVIVIYFVVVMAVGLWAMFSTNRGTVGGFFLAGRSMVWWPIGASLFASNIGSGHFVGLAGTGAAAGIATGGFEWNALILVVLLGWVFVPIYIKAGVVTMPEYLRKRFGGQRIQVYLSVLSLVLYIFTKISADIFSGAIFINLALGLDLYLAIFILLAITALYTITGGLAAVIYTDTLQTVIMLLGSFILTGFAFHEVGGYSAFVTKYMNAIPTVTSYGNTTVKKECYTPRADSFHIFRDPLKGDLPWPGLIFGLTIISLWYWCTDQVIVQRCLSAKNMSHVKAGCIMCGYMKLLPMFLMVMPGMISRILFTEKVACTVPSECEKYCGTKVGCTNIAYPTLVVELMPNGLRGLMLSVMLASLMSSLTSIFNSASTLFTMDIYTKIRKKASEKELMIAGRLFMLVLIGVSIAWVPIVQSAQSGQLFDYIQSITSYLGPPIAAVFLLAIFCKRVNEPGAFWGLIIGFLIGVSRMITEFAYGTGSCMEPSNCPTIICGVHYLYFAIILFVITIIVILAISLFTKPIADVHLYRLCWSLRNSKEERIDLDAEDEDIQDAREDALEIDTEASEEKKGCLRQAYDMFCGLDQQKGPKMTKEEEAAMKLKMTDTSEKRLWRMVVNINGIILLAVAVFCHAYFA.

Residues 1 to 24 (MDSSTWSPPATATAEPLQAYERIR) lie on the Extracellular side of the membrane. A helical transmembrane segment spans residues 25–47 (NAADISVIVIYFVVVMAVGLWAM). Residues 48–66 (FSTNRGTVGGFFLAGRSMV) are Cytoplasmic-facing. Residues 67 to 90 (WWPIGASLFASNIGSGHFVGLAGT) form a helical membrane-spanning segment. Topologically, residues 91–95 (GAAAG) are extracellular. Residues 96-117 (IATGGFEWNALILVVLLGWVFV) traverse the membrane as a helical segment. The Cytoplasmic portion of the chain corresponds to 118–139 (PIYIKAGVVTMPEYLRKRFGGQ). A helical transmembrane segment spans residues 140 to 169 (RIQVYLSVLSLVLYIFTKISADIFSGAIFI). The Extracellular segment spans residues 170 to 176 (NLALGLD). Residues 177–193 (LYLAIFILLAITALYTI) form a helical membrane-spanning segment. Residues 194-202 (TGGLAAVIY) are Cytoplasmic-facing. The chain crosses the membrane as a helical span at residues 203–221 (TDTLQTVIMLLGSFILTGF). Over 222–275 (AFHEVGGYSAFVTKYMNAIPTVTSYGNTTVKKECYTPRADSFHIFRDPLKGDLP) the chain is Extracellular. Asn248 carries N-linked (GlcNAc...) asparagine glycosylation. 5 disulfides stabilise this stretch: Cys255/Cys511, Cys255/Cys610, Cys345/Cys351, Cys355/Cys361, and Cys517/Cys522. The helical transmembrane segment at 276-295 (WPGLIFGLTIISLWYWCTDQ) threads the bilayer. Topologically, residues 296 to 309 (VIVQRCLSAKNMSH) are cytoplasmic. The chain crosses the membrane as a helical span at residues 310 to 331 (VKAGCIMCGYMKLLPMFLMVMP). Residues 332–375 (GMISRILFTEKVACTVPSECEKYCGTKVGCTNIAYPTLVVELMP) lie on the Extracellular side of the membrane. The helical transmembrane segment at 376-406 (NGLRGLMLSVMLASLMSSLTSIFNSASTLFT) threads the bilayer. Topologically, residues 407–422 (MDIYTKIRKKASEKEL) are cytoplasmic. A helical transmembrane segment spans residues 423 to 444 (MIAGRLFMLVLIGVSIAWVPIV). Over 445–451 (QSAQSGQ) the chain is Extracellular. The helical transmembrane segment at 452-477 (LFDYIQSITSYLGPPIAAVFLLAIFC) threads the bilayer. Residue Gln457 coordinates D-glucose. Over 478–481 (KRVN) the chain is Cytoplasmic. The helical transmembrane segment at 482 to 504 (EPGAFWGLIIGFLIGVSRMITEF) threads the bilayer. Topologically, residues 505 to 525 (AYGTGSCMEPSNCPTIICGVH) are extracellular. A helical membrane pass occupies residues 526–547 (YLYFAIILFVITIIVILAISLF). Over 548–644 (TKPIADVHLY…TSEKRLWRMV (97 aa)) the chain is Cytoplasmic. A helical membrane pass occupies residues 645 to 662 (VNINGIILLAVAVFCHAY). Residues 663 to 664 (FA) are Extracellular-facing.

It belongs to the sodium:solute symporter (SSF) (TC 2.A.21) family. Post-translationally, N-glycosylation is not necessary for the cotransporter function.

It localises to the apical cell membrane. It catalyses the reaction D-glucose(out) + 2 Na(+)(out) = D-glucose(in) + 2 Na(+)(in). It carries out the reaction D-galactose(out) + 2 Na(+)(out) = D-galactose(in) + 2 Na(+)(in). Enhanced by the interaction with PDZK1IP1/MAP17; but unlike SLC5A2/SGLT2, PDZK1IP1 is not essential for SLC5A1 transporter activity. Possibly modulated by cholesterol binding. Its function is as follows. Electrogenic Na(+)-coupled sugar symporter that actively transports D-glucose or D-galactose at the plasma membrane, with a Na(+) to sugar coupling ratio of 2:1. Transporter activity is driven by a transmembrane Na(+) electrochemical gradient set by the Na(+)/K(+) pump. Has a primary role in the transport of dietary monosaccharides from enterocytes to blood. Responsible for the absorption of D-glucose or D-galactose across the apical brush-border membrane of enterocytes, whereas basolateral exit is provided by GLUT2. Additionally, functions as a D-glucose sensor in enteroendocrine cells, triggering the secretion of the incretins GCG and GIP that control food intake and energy homeostasis. Together with SGLT2, functions in reabsorption of D-glucose from glomerular filtrate, playing a nonredundant role in the S3 segment of the proximal tubules. Transports D-glucose into endometrial epithelial cells, controlling glycogen synthesis and nutritional support for the embryo as well as the decidual transformation of endometrium prior to conception. Acts as a water channel enabling passive water transport in response to the osmotic gradient created upon sugar and Na(+) uptake. Has high water conductivity comparable to aquaporins and therefore is expected to play an important role in transepithelial water permeability, especially in the small intestine. In Ovis aries (Sheep), this protein is Sodium/glucose cotransporter 1 (SLC5A1).